We begin with the raw amino-acid sequence, 371 residues long: MFYSLTIISILEVLLVLVPSLLAVAYVTVAERKTMASMQRRLGPNAVGYLGLLQAFADALKLLLKEYVALTQANMTLFFLGPVITLIFSLLGYAVIPYGPSLVIQDVNLGILYMLAVSSLATYGILLAGWSANSKYAFLGSLRSAAQLISYELVLSSAILLVIMLTGSFNLGVNTESQRAVLFVLPLLPIFIIFFIGSIAETNRAPFDLAEAESELVSGFMTEHAAVVFVFFFLAEYGSIVLMCILTSILFLGGYLFINLKDVFNILDFVYSNLFIFEINWMVSERSYTEDFFNNYKSILEGWLYGWIIGLKSSIMIFIFILGRASFPRIRYDQLMGFCWTVLLPIIFALIILVPCILESFYILPWNLNLF.

A run of 10 helical transmembrane segments spans residues 7-27 (IISI…VAYV), 44-64 (PNAV…KLLL), 77-97 (LFFL…AVIP), 109-129 (LGIL…LLAG), 153-173 (LVLS…NLGV), 180-200 (AVLF…GSIA), 226-246 (AVVF…MCIL), 263-283 (VFNI…NWMV), 302-322 (GWLY…IFIL), and 338-358 (FCWT…PCIL).

Belongs to the complex I subunit 1 family.

The protein localises to the mitochondrion inner membrane. It carries out the reaction a ubiquinone + NADH + 5 H(+)(in) = a ubiquinol + NAD(+) + 4 H(+)(out). Functionally, core subunit of the mitochondrial membrane respiratory chain NADH dehydrogenase (Complex I) that is believed to belong to the minimal assembly required for catalysis. Complex I functions in the transfer of electrons from NADH to the respiratory chain. The immediate electron acceptor for the enzyme is believed to be ubiquinone. This is NADH-ubiquinone oxidoreductase chain 1 (ndh-1) from Neurospora crassa (strain ATCC 24698 / 74-OR23-1A / CBS 708.71 / DSM 1257 / FGSC 987).